Reading from the N-terminus, the 83-residue chain is uncharacterized protein (83 aa).

Helical transmembrane passes span 7 to 26 (FARF…IVSY), 36 to 58 (LSPL…ILPF), and 65 to 82 (ILTV…YLAF).

It localises to the cell membrane. This is an uncharacterized protein from Archaeoglobus fulgidus (strain ATCC 49558 / DSM 4304 / JCM 9628 / NBRC 100126 / VC-16).